A 391-amino-acid chain; its full sequence is Saxitoxin and tetrodotoxin-binding protein 1 (391 aa).

The N-terminal stretch at 1–20 is a signal peptide; it reads MGAVPGVVLLLMLAVLGIRA. 2 repeat units span residues 24 to 202 and 203 to 391. Residues asparagine 54, asparagine 63, asparagine 97, asparagine 234, asparagine 268, asparagine 277, and asparagine 307 are each glycosylated (N-linked (GlcNAc...) asparagine).

In terms of assembly, homodimer or heterodimer of PSTBP1 and PSTBP2. Post-translationally, glycosylated.

It is found in the secreted. Its function is as follows. Binds both saxitoxin and tetradotoxin. May play a role in toxin accumulation and/or excretion. In Takifugu pardalis (Panther puffer), this protein is Saxitoxin and tetrodotoxin-binding protein 1 (psbp1).